A 188-amino-acid chain; its full sequence is Trafficking protein particle complex subunit 5 (188 aa).

Belongs to the TRAPP small subunits family. BET3 subfamily. Part of the multisubunit TRAPP (transport protein particle) complex.

It localises to the golgi apparatus. It is found in the cis-Golgi network. The protein localises to the endoplasmic reticulum. In terms of biological role, may play a role in vesicular transport from endoplasmic reticulum to Golgi. The polypeptide is Trafficking protein particle complex subunit 5 (TRAPPC5) (Gallus gallus (Chicken)).